A 67-amino-acid chain; its full sequence is U-myrmeciitoxin(01)-Mg4a (67 aa).

Positions 1–25 (MGKVFFFVLMIAIIGSTFLIEEALG) are cleaved as a signal peptide.

It belongs to the ant myrmeciitoxin-01 family. Homodimer; disulfide-linked. Contains 2 intrachain disulfide bonds (one per chain) and 1 interchain disulfide bond. In terms of tissue distribution, expressed by the venom gland.

The protein localises to the secreted. The chain is U-myrmeciitoxin(01)-Mg4a from Myrmecia gulosa (Red bulldog ant).